A 158-amino-acid chain; its full sequence is Glycosyl-phosphatidylinositol-anchored molecule-like protein (158 aa).

The first 17 residues, 1–17, serve as a signal peptide directing secretion; it reads MLLFALLLAMELPLVAA. The UPAR/Ly6 domain occupies 29-134; the sequence is LRCHDCAVIN…DEVTEEELPE (106 aa). 5 disulfides stabilise this stretch: cysteine 31/cysteine 55, cysteine 34/cysteine 42, cysteine 48/cysteine 73, cysteine 77/cysteine 104, and cysteine 105/cysteine 110.

It is found in the cell membrane. May play a role in the apoptotic pathway or cell-cycle regulation induced by p53/TP53 after DNA damage. The polypeptide is Glycosyl-phosphatidylinositol-anchored molecule-like protein (GML) (Homo sapiens (Human)).